We begin with the raw amino-acid sequence, 370 residues long: Dual-specificity RNA methyltransferase RlmN (370 aa).

The active-site Proton acceptor is glutamate 93. The Radical SAM core domain maps to 99-337 (EEGRGTLCVS…VTTVRKTRGD (239 aa)). An intrachain disulfide couples cysteine 106 to cysteine 343. Residues cysteine 113, cysteine 117, and cysteine 120 each coordinate [4Fe-4S] cluster. Residues 167–168 (GE), serine 199, 221–223 (SLH), and asparagine 300 contribute to the S-adenosyl-L-methionine site. Cysteine 343 functions as the S-methylcysteine intermediate in the catalytic mechanism.

This sequence belongs to the radical SAM superfamily. RlmN family. [4Fe-4S] cluster is required as a cofactor.

It localises to the cytoplasm. The catalysed reaction is adenosine(2503) in 23S rRNA + 2 reduced [2Fe-2S]-[ferredoxin] + 2 S-adenosyl-L-methionine = 2-methyladenosine(2503) in 23S rRNA + 5'-deoxyadenosine + L-methionine + 2 oxidized [2Fe-2S]-[ferredoxin] + S-adenosyl-L-homocysteine. It catalyses the reaction adenosine(37) in tRNA + 2 reduced [2Fe-2S]-[ferredoxin] + 2 S-adenosyl-L-methionine = 2-methyladenosine(37) in tRNA + 5'-deoxyadenosine + L-methionine + 2 oxidized [2Fe-2S]-[ferredoxin] + S-adenosyl-L-homocysteine. Functionally, specifically methylates position 2 of adenine 2503 in 23S rRNA and position 2 of adenine 37 in tRNAs. m2A2503 modification seems to play a crucial role in the proofreading step occurring at the peptidyl transferase center and thus would serve to optimize ribosomal fidelity. The protein is Dual-specificity RNA methyltransferase RlmN of Francisella tularensis subsp. mediasiatica (strain FSC147).